The following is an 88-amino-acid chain: Small ribosomal subunit protein bS20 (88 aa).

Disordered stretches follow at residues 1-29 and 69-88; these read MANT…SKLR and KNTA…AMAA.

It belongs to the bacterial ribosomal protein bS20 family.

Its function is as follows. Binds directly to 16S ribosomal RNA. The chain is Small ribosomal subunit protein bS20 from Polynucleobacter asymbioticus (strain DSM 18221 / CIP 109841 / QLW-P1DMWA-1) (Polynucleobacter necessarius subsp. asymbioticus).